The chain runs to 454 residues: Membrane-bound lytic murein transglycosylase F (454 aa).

Positions 1–24 are cleaved as a signal peptide; sequence MRRPLRRVTVVLLWVALAIGVAWF. Positions 25–265 are non-LT domain; that stretch reads YDYRRSMQSL…IYNRYYTAVD (241 aa). The tract at residues 266–454 is LT domain; the sequence is TFDYVDVKKF…YDILKQKKAV (189 aa). Glu-311 is an active-site residue.

This sequence in the N-terminal section; belongs to the bacterial solute-binding protein 3 family. It in the C-terminal section; belongs to the transglycosylase Slt family.

The protein resides in the cell outer membrane. It carries out the reaction Exolytic cleavage of the (1-&gt;4)-beta-glycosidic linkage between N-acetylmuramic acid (MurNAc) and N-acetylglucosamine (GlcNAc) residues in peptidoglycan, from either the reducing or the non-reducing ends of the peptidoglycan chains, with concomitant formation of a 1,6-anhydrobond in the MurNAc residue.. Functionally, murein-degrading enzyme that degrades murein glycan strands and insoluble, high-molecular weight murein sacculi, with the concomitant formation of a 1,6-anhydromuramoyl product. Lytic transglycosylases (LTs) play an integral role in the metabolism of the peptidoglycan (PG) sacculus. Their lytic action creates space within the PG sacculus to allow for its expansion as well as for the insertion of various structures such as secretion systems and flagella. This Desulfosudis oleivorans (strain DSM 6200 / JCM 39069 / Hxd3) (Desulfococcus oleovorans) protein is Membrane-bound lytic murein transglycosylase F.